The sequence spans 453 residues: Phosphoglucosamine mutase (453 aa).

Ser-110 serves as the catalytic Phosphoserine intermediate. 4 residues coordinate Mg(2+): Ser-110, Asp-247, Asp-249, and Asp-251. A Phosphoserine modification is found at Ser-110.

Belongs to the phosphohexose mutase family. Mg(2+) is required as a cofactor. Post-translationally, activated by phosphorylation.

It catalyses the reaction alpha-D-glucosamine 1-phosphate = D-glucosamine 6-phosphate. Catalyzes the conversion of glucosamine-6-phosphate to glucosamine-1-phosphate. This Tropheryma whipplei (strain TW08/27) (Whipple's bacillus) protein is Phosphoglucosamine mutase.